The following is a 146-amino-acid chain: Large ribosomal subunit protein uL15 (146 aa).

The span at 1 to 13 (MKLHELRPAEGSK) shows a compositional bias: basic and acidic residues. Residues 1 to 54 (MKLHELRPAEGSKKAPKRVGRGNGSGLGKTAGKGHKGQNARSGGGVRPGFEGGQ) are disordered. 2 stretches are compositionally biased toward gly residues: residues 21–31 (RGNGSGLGKTA) and 42–52 (SGGGVRPGFEG).

Belongs to the universal ribosomal protein uL15 family. In terms of assembly, part of the 50S ribosomal subunit.

Its function is as follows. Binds to the 23S rRNA. The sequence is that of Large ribosomal subunit protein uL15 from Clostridium novyi (strain NT).